We begin with the raw amino-acid sequence, 394 residues long: Serine palmitoyltransferase (394 aa).

Pyridoxal 5'-phosphate-binding positions include 111 to 112, serine 183, histidine 211, and threonine 239; that span reads GF. Lysine 242 is modified (N6-(pyridoxal phosphate)lysine).

The protein belongs to the class-II pyridoxal-phosphate-dependent aminotransferase family. It depends on pyridoxal 5'-phosphate as a cofactor.

The enzyme catalyses L-serine + hexadecanoyl-CoA + H(+) = 3-oxosphinganine + CO2 + CoA. It participates in lipid metabolism; sphingolipid metabolism. Involved in de novo bacterial ceramide synthesis. Catalyzes the condensation of L-serine with palmitoyl-CoA (hexadecanoyl-CoA) to produce 3-oxosphinganine. Also capable of using alanine as substrate leading to the formation of 1-deoxysphinganine (1-deoxySa). Contributes to the levels of endogenous sphingolipids in its host. This Bacteroides ovatus (strain ATCC 8483 / DSM 1896 / JCM 5824 / BCRC 10623 / CCUG 4943 / NCTC 11153) protein is Serine palmitoyltransferase.